Here is a 496-residue protein sequence, read N- to C-terminus: Legumin (496 aa).

The N-terminal stretch at 1–21 (MAKLLALSLSFCFLLFGTCFA) is a signal peptide. Cystine bridges form between cysteine 31–cysteine 64 and cysteine 107–cysteine 318. The 195-residue stretch at 36 to 230 (LNALKPDNRI…ALNVNRRIVN (195 aa)) folds into the Cupin type-1 1 domain. The tract at residues 240–311 (EKGAIVKVKG…RGGSKSQRDN (72 aa)) is disordered. Positions 257–269 (PEKEPRQKRGSRQ) are enriched in basic and acidic residues. Positions 324-453 (QNIGSSSSPD…INVCQKKLLQ (130 aa)) constitute a Cupin type-1 2 domain.

It belongs to the 11S seed storage protein (globulins) family. As to quaternary structure, hexamer; each subunit is composed of an acidic and a basic chain derived from a single precursor and linked by a disulfide bond.

In terms of biological role, seed storage protein. Alpha-amylase inhibitor. The chain is Legumin from Cicer arietinum (Chickpea).